Here is a 187-residue protein sequence, read N- to C-terminus: MASTADFKNGLVLQIDGQLWQIVEFQHVKPGKGPAFVRTKLKNVVSGKVVDKTYNAGVKVETATVDRRDATYLYRDGSDFVFMDSEDFEQHPLPESLVGRLADFLLESMPVQIAFHDGTPLYLELPVSVELEVTHTEPGLQGDRSSAGTKPATVETGAEIQVPLFINTGDRLKVDTRDGSYLGRVNA.

This sequence belongs to the elongation factor P family.

The protein resides in the cytoplasm. Its pathway is protein biosynthesis; polypeptide chain elongation. In terms of biological role, involved in peptide bond synthesis. Stimulates efficient translation and peptide-bond synthesis on native or reconstituted 70S ribosomes in vitro. Probably functions indirectly by altering the affinity of the ribosome for aminoacyl-tRNA, thus increasing their reactivity as acceptors for peptidyl transferase. The chain is Elongation factor P from Mycolicibacterium smegmatis (strain ATCC 700084 / mc(2)155) (Mycobacterium smegmatis).